The chain runs to 53 residues: ATP synthase protein 8 (53 aa).

Residues 4-24 (MAPISWLLLFIIFSITFILFC) traverse the membrane as a helical segment.

This sequence belongs to the ATPase protein 8 family. As to quaternary structure, F-type ATPases have 2 components, CF(1) - the catalytic core - and CF(0) - the membrane proton channel.

It is found in the mitochondrion membrane. Its function is as follows. Mitochondrial membrane ATP synthase (F(1)F(0) ATP synthase or Complex V) produces ATP from ADP in the presence of a proton gradient across the membrane which is generated by electron transport complexes of the respiratory chain. F-type ATPases consist of two structural domains, F(1) - containing the extramembraneous catalytic core and F(0) - containing the membrane proton channel, linked together by a central stalk and a peripheral stalk. During catalysis, ATP synthesis in the catalytic domain of F(1) is coupled via a rotary mechanism of the central stalk subunits to proton translocation. Part of the complex F(0) domain. Minor subunit located with subunit a in the membrane. This Drosophila mauritiana (Fruit fly) protein is ATP synthase protein 8 (mt:ATPase8).